The following is a 177-amino-acid chain: MLLLPQKDWHWKYNDSYGVLSVSLGSEIEFLTAYKAKSLIPDALSSMEFNISHAKFYMSLLDKLPKTLTLTDAAVVQIALNATAAHFMLTPQMPKSWFFDTSEVCVYSDVGKVFELKCQKQRALVLVVENTLQSALVMLLSPECVLSGAKTLGQFETIKVMHNRLHPLRAQRHVVAA.

This sequence belongs to the ZapC family. Interacts directly with FtsZ.

It is found in the cytoplasm. Functionally, contributes to the efficiency of the cell division process by stabilizing the polymeric form of the cell division protein FtsZ. Acts by promoting interactions between FtsZ protofilaments and suppressing the GTPase activity of FtsZ. This chain is Cell division protein ZapC, found in Shewanella oneidensis (strain ATCC 700550 / JCM 31522 / CIP 106686 / LMG 19005 / NCIMB 14063 / MR-1).